A 402-amino-acid chain; its full sequence is Mannonate dehydratase 1 (402 aa).

This sequence belongs to the mannonate dehydratase family. Fe(2+) serves as cofactor. The cofactor is Mn(2+).

It catalyses the reaction D-mannonate = 2-dehydro-3-deoxy-D-gluconate + H2O. Its pathway is carbohydrate metabolism; pentose and glucuronate interconversion. Functionally, catalyzes the dehydration of D-mannonate. The protein is Mannonate dehydratase 1 (uxuA1) of Agrobacterium fabrum (strain C58 / ATCC 33970) (Agrobacterium tumefaciens (strain C58)).